The sequence spans 648 residues: Biosynthetic arginine decarboxylase (648 aa).

N6-(pyridoxal phosphate)lysine is present on K109. 291–301 (IDVGGGLGIDF) serves as a coordination point for substrate.

It belongs to the Orn/Lys/Arg decarboxylase class-II family. SpeA subfamily. It depends on Mg(2+) as a cofactor. Pyridoxal 5'-phosphate serves as cofactor.

It carries out the reaction L-arginine + H(+) = agmatine + CO2. Catalyzes the biosynthesis of agmatine from arginine. The protein is Biosynthetic arginine decarboxylase of Prochlorococcus marinus subsp. pastoris (strain CCMP1986 / NIES-2087 / MED4).